A 42-amino-acid polypeptide reads, in one-letter code: uncharacterized protein (42 aa).

The protein resides in the plastid. It is found in the chloroplast. This is an uncharacterized protein from Diacronema lutheri (Unicellular marine alga).